The primary structure comprises 149 residues: Large ribosomal subunit protein uL13 (149 aa).

It belongs to the universal ribosomal protein uL13 family. Part of the 50S ribosomal subunit.

This protein is one of the early assembly proteins of the 50S ribosomal subunit, although it is not seen to bind rRNA by itself. It is important during the early stages of 50S assembly. The chain is Large ribosomal subunit protein uL13 from Chlorobium luteolum (strain DSM 273 / BCRC 81028 / 2530) (Pelodictyon luteolum).